Consider the following 344-residue polypeptide: MIPQSVRRVVAAAPQSPVVSSLAASSAPRAGASYILSSYQPNALQKRRYSSSKPSSPDDGSSRAFAARASVPAAGTSKTPGEKRKRKAKEPVMPPLPSVPSTRHIKDEALALSTFFALHRPISVTQLLPKTVTEESFAEIFNHRKGHKATDVLSTLSQAVHDLESPMSGLRLSDNDVEDGSTKISLKHPDGTESDVYFQLNSMSGHFLPFNPPPPPEPIAEVDEAAAEAEASAAIAEEIAATAEQEPETRVYKAVVTIEETRDTNGQYKIMAHSPQLVEDDAVQPRSFLERLALRQIRYEEARQQQGIMHAISVRRQKKLKIKKKKYKKLMRRTRNERRKQDRL.

3 disordered regions span residues 1–27 (MIPQSVRRVVAAAPQSPVVSSLAASSA), 43–101 (ALQK…SVPS), and 325–344 (KKYKKLMRRTRNERRKQDRL). Low complexity predominate over residues 51 to 74 (SSKPSSPDDGSSRAFAARASVPAA). The span at 325–338 (KKYKKLMRRTRNER) shows a compositional bias: basic residues.

Belongs to the mitochondrion-specific ribosomal protein mS38 family. Component of the mitochondrial small ribosomal subunit (mt-SSU). Mature N.crassa 74S mitochondrial ribosomes consist of a small (37S) and a large (54S) subunit. The 37S small subunit contains a 16S ribosomal RNA (16S mt-rRNA) and 32 different proteins. The 54S large subunit contains a 23S rRNA (23S mt-rRNA) and 42 different proteins.

Its subcellular location is the mitochondrion. Its function is as follows. Component of the mitochondrial ribosome (mitoribosome), a dedicated translation machinery responsible for the synthesis of mitochondrial genome-encoded proteins, including at least some of the essential transmembrane subunits of the mitochondrial respiratory chain. The mitoribosomes are attached to the mitochondrial inner membrane and translation products are cotranslationally integrated into the membrane. The sequence is that of Small ribosomal subunit protein mS38 (cox24) from Neurospora crassa (strain ATCC 24698 / 74-OR23-1A / CBS 708.71 / DSM 1257 / FGSC 987).